Reading from the N-terminus, the 418-residue chain is cAMP-dependent protein kinase type II-beta regulatory subunit (418 aa).

The segment at 2 to 153 (SIEIPAGLTE…RLQEACKDIL (152 aa)) is dimerization and phosphorylation. Residues 48–57 (TARFGHEGRT) are compositionally biased toward basic and acidic residues. A disordered region spans residues 48–96 (TARFGHEGRTWGDLGAAAGGGTPSKGVNFAEEPMQSDSEDGEEEEAAPA). T69 carries the phosphothreonine modification. Phosphoserine is present on residues S83, S85, and S114. The span at 84 to 94 (DSEDGEEEEAA) shows a compositional bias: acidic residues. 3',5'-cyclic AMP contacts are provided by residues 154 to 275 (LFKN…ESLP), E223, R232, 276 to 418 (FLKS…EPTA), E352, and R361.

It belongs to the cAMP-dependent kinase regulatory chain family. In terms of assembly, the inactive form of the enzyme is composed of two regulatory chains and two catalytic chains. Activation by cAMP produces two active catalytic monomers and a regulatory dimer that binds four cAMP molecules. Interacts with PRKACA and PRKACB. Interacts with the phosphorylated form of PJA2. Forms a complex composed of PRKAR2B, GSK3B and GSKIP through GSKIP interaction; facilitates PKA-induced phosphorylation and regulates GSK3B activity. In terms of processing, phosphorylated by the activated catalytic chain. In terms of tissue distribution, four types of regulatory chains are found: I-alpha, I-beta, II-alpha, and II-beta. Their expression varies among tissues and is in some cases constitutive and in others inducible.

Its subcellular location is the cytoplasm. The protein localises to the cell membrane. Regulatory subunit of the cAMP-dependent protein kinases involved in cAMP signaling in cells. Type II regulatory chains mediate membrane association by binding to anchoring proteins, including the MAP2 kinase. This chain is cAMP-dependent protein kinase type II-beta regulatory subunit (PRKAR2B), found in Homo sapiens (Human).